Here is a 918-residue protein sequence, read N- to C-terminus: Calcium-transporting ATPase type 2C member 1 (918 aa).

At 1–78 (MKVARFQKIP…EPLWKKYISQ (78 aa)) the chain is on the cytoplasmic side. Residues 79 to 95 (FKNPLIMLLLASAVISI) form a helical membrane-spanning segment. Residues 96-99 (LMRQ) lie on the Extracellular side of the membrane. The chain crosses the membrane as a helical span at residues 100 to 121 (FDDAVSITVAIVIVVTVAFVQE). Residues 122–262 (YRSEKSLEEL…PKTPLQKSMD (141 aa)) are Cytoplasmic-facing. A helical membrane pass occupies residues 263-282 (LLGKQLSFYSFGIIGIIMLV). Over 283–294 (GWLLGKDILEMF) the chain is Extracellular. The helical transmembrane segment at 295-316 (TISVSLAVAAIPEGLPIVVTVT) threads the bilayer. Topologically, residues 317 to 699 (LALGVMRMVK…EGKGIYNNIK (383 aa)) are cytoplasmic. Residue Asp349 is the 4-aspartylphosphate intermediate of the active site. The Mg(2+) site is built by Asp643 and Asp647. A helical membrane pass occupies residues 700 to 722 (NFVRFQLSTSIAALTLISLATLM). At 723-727 (NFPNP) the chain is on the extracellular side. The helical transmembrane segment at 728-751 (LNAMQILWINIIMDGPPAQSLGVE) threads the bilayer. The Cytoplasmic segment spans residues 752–775 (PVDKDVIRKPPRNWKDSILTKNLI). Residues 776–794 (LKILVSSIIIVCGTLFVFW) form a helical membrane-spanning segment. At 795-801 (RELRDNV) the chain is on the extracellular side. Residues 802-827 (ITPRDTTMTFTCFVFFDMFNALSSRS) traverse the membrane as a helical segment. At 828-842 (QTKSVFEIGLCSNKM) the chain is on the cytoplasmic side. Residues 843–862 (FCYAVLGSIMGQLLVIYFPP) form a helical membrane-spanning segment. Residues 863–875 (LQKVFQTESLSIL) lie on the Extracellular side of the membrane. Residues 876 to 892 (DLLFLLGLTSSVCIVSE) form a helical membrane-spanning segment. Residues 893–918 (IIKKVERSREKVQKNAGSASSSFLEV) are Cytoplasmic-facing.

The protein belongs to the cation transport ATPase (P-type) (TC 3.A.3) family. Type IIA subfamily. Monomer. Homodimer. Expressed in hippocampal neurons in the CA3 region of the Amon's horn (at protein level). Expressed in brain, heart, lung, stomach, liver, colon and mammary gland.

It localises to the golgi apparatus. The protein localises to the trans-Golgi network membrane. Its subcellular location is the golgi stack membrane. The enzyme catalyses Ca(2+)(in) + ATP + H2O = Ca(2+)(out) + ADP + phosphate + H(+). It carries out the reaction Mn(2+)(in) + ATP + H2O = Mn(2+)(out) + ADP + phosphate + H(+). Functionally, ATP-driven pump that supplies the Golgi apparatus with Ca(2+) and Mn(2+) ions, both essential cofactors for processing and trafficking of newly synthesized proteins in the secretory pathway. Within a catalytic cycle, acquires Ca(2+) or Mn(2+) ions on the cytoplasmic side of the membrane and delivers them to the lumenal side. The transfer of ions across the membrane is coupled to ATP hydrolysis and is associated with a transient phosphorylation that shifts the pump conformation from inward-facing to outward-facing state. Plays a primary role in the maintenance of Ca(2+) homeostasis in the trans-Golgi compartment with a functional impact on Golgi and post-Golgi protein sorting as well as a structural impact on cisternae morphology. Responsible for loading the Golgi stores with Ca(2+) ions in keratinocytes, contributing to keratinocyte differentiation and epidermis integrity. Participates in Ca(2+) and Mn(2+) ions uptake into the Golgi store of hippocampal neurons and regulates protein trafficking required for neural polarity. May also play a role in the maintenance of Ca(2+) and Mn(2+) homeostasis and signaling in the cytosol while preventing cytotoxicity. The protein is Calcium-transporting ATPase type 2C member 1 of Mus musculus (Mouse).